A 334-amino-acid chain; its full sequence is N-chimaerin (334 aa).

The span at 1 to 10 (MPSKESWSGR) shows a compositional bias: polar residues. A disordered region spans residues 1–22 (MPSKESWSGRKTNRATVHKSKQ). Threonine 67 carries the post-translational modification Phosphothreonine. The Phorbol-ester/DAG-type zinc-finger motif lies at 80–130 (VHNFKVHTFRGPHWCEYCANFMWGLIAQGVKCADCGLNVHKQCSKMVPNDC). One can recognise a Rho-GAP domain in the interval 143-334 (CDLTTLVKAH…LLIKNEDILF (192 aa)). At threonine 215 the chain carries Phosphothreonine.

As to quaternary structure, interacts with EPHA4; effector of EPHA4 in axon guidance linking EPHA4 activation to RAC1 regulation. In terms of processing, phosphorylated. Phosphorylation is EPHA4 kinase activity-dependent. In neurons in brain regions that are involved in learning and memory processes.

Functionally, GTPase-activating protein for p21-rac and a phorbol ester receptor. Involved in the assembly of neuronal locomotor circuits as a direct effector of EPHA4 in axon guidance. The polypeptide is N-chimaerin (Chn1) (Rattus norvegicus (Rat)).